The primary structure comprises 314 residues: DNA-directed RNA polymerase subunit alpha (314 aa).

Positions 1–228 (MAQFHYECVE…SLFEPLKDIT (228 aa)) are alpha N-terminal domain (alpha-NTD). The segment at 240 to 314 (DPTSQIPIEE…LPQEKVAKAT (75 aa)) is alpha C-terminal domain (alpha-CTD).

It belongs to the RNA polymerase alpha chain family. In terms of assembly, in cyanobacteria the RNAP catalytic core is composed of 2 alpha, 1 beta, 1 beta', 1 gamma and 1 omega subunit. When a sigma factor is associated with the core the holoenzyme is formed, which can initiate transcription.

The enzyme catalyses RNA(n) + a ribonucleoside 5'-triphosphate = RNA(n+1) + diphosphate. Its function is as follows. DNA-dependent RNA polymerase catalyzes the transcription of DNA into RNA using the four ribonucleoside triphosphates as substrates. In Trichodesmium erythraeum (strain IMS101), this protein is DNA-directed RNA polymerase subunit alpha.